Reading from the N-terminus, the 218-residue chain is Thiamine-phosphate synthase (218 aa).

4-amino-2-methyl-5-(diphosphooxymethyl)pyrimidine is bound by residues 36-40 (QVRSK) and Asp-70. Residues Asp-71 and Asp-94 each coordinate Mg(2+). Thr-113 lines the 4-amino-2-methyl-5-(diphosphooxymethyl)pyrimidine pocket. 141–143 (TPT) contacts 2-[(2R,5Z)-2-carboxy-4-methylthiazol-5(2H)-ylidene]ethyl phosphate. Residue Lys-144 coordinates 4-amino-2-methyl-5-(diphosphooxymethyl)pyrimidine.

Belongs to the thiamine-phosphate synthase family. The cofactor is Mg(2+).

It catalyses the reaction 2-[(2R,5Z)-2-carboxy-4-methylthiazol-5(2H)-ylidene]ethyl phosphate + 4-amino-2-methyl-5-(diphosphooxymethyl)pyrimidine + 2 H(+) = thiamine phosphate + CO2 + diphosphate. It carries out the reaction 2-(2-carboxy-4-methylthiazol-5-yl)ethyl phosphate + 4-amino-2-methyl-5-(diphosphooxymethyl)pyrimidine + 2 H(+) = thiamine phosphate + CO2 + diphosphate. The catalysed reaction is 4-methyl-5-(2-phosphooxyethyl)-thiazole + 4-amino-2-methyl-5-(diphosphooxymethyl)pyrimidine + H(+) = thiamine phosphate + diphosphate. The protein operates within cofactor biosynthesis; thiamine diphosphate biosynthesis; thiamine phosphate from 4-amino-2-methyl-5-diphosphomethylpyrimidine and 4-methyl-5-(2-phosphoethyl)-thiazole: step 1/1. In terms of biological role, condenses 4-methyl-5-(beta-hydroxyethyl)thiazole monophosphate (THZ-P) and 2-methyl-4-amino-5-hydroxymethyl pyrimidine pyrophosphate (HMP-PP) to form thiamine monophosphate (TMP). This chain is Thiamine-phosphate synthase, found in Corynebacterium jeikeium (strain K411).